A 66-amino-acid chain; its full sequence is Early E3 7.7 kDa protein (66 aa).

Residues Asn7 and Asn24 are each glycosylated (N-linked (GlcNAc...) asparagine; by host). The chain crosses the membrane as a helical span at residues 44-64 (ITILIVIGILILSVILYFLFS).

The protein resides in the host nucleus membrane. In Human adenovirus B serotype 7 (HAdV-7), this protein is Early E3 7.7 kDa protein.